A 352-amino-acid chain; its full sequence is Dolichol-phosphate mannosyltransferase (352 aa).

At 1 to 229 (MKVSVIIPTY…HIYRLMKWEG (229 aa)) the chain is on the cytoplasmic side. 14 residues coordinate GDP-alpha-D-mannose: proline 8, tyrosine 10, glutamate 12, valine 37, aspartate 39, aspartate 89, alanine 90, aspartate 91, glutamine 93, arginine 117, valine 156, lysine 178, arginine 202, and lysine 208. Residues aspartate 91 and glutamine 93 each coordinate Mg(2+). Aspartate 91 and glutamine 93 together coordinate Mn(2+). The chain crosses the membrane as a helical span at residues 230-256 (EIDRIVKFSIVGLSGILVNEGFLWLFV). Over 257-261 (NLGIP) the chain is Extracellular. Residues 262–286 (KEIAVIPAVELSILNNFFWNDIWTF) traverse the membrane as a helical segment. Over 287-293 (KDIRRGS) the chain is Cytoplasmic. The chain crosses the membrane as a helical span at residues 294–320 (IFSRLLKFHIAALSGAVVNFIVYWILL). The Extracellular portion of the chain corresponds to 321–325 (FLGIH). Residues 326–350 (YLIANLVGIVLSFGVRYVINRHVTW) traverse the membrane as a helical segment. At 351-352 (AT) the chain is on the cytoplasmic side.

Belongs to the glycosyltransferase 2 family. The cofactor is Mg(2+). Mn(2+) is required as a cofactor. It depends on Ca(2+) as a cofactor.

The protein resides in the cell membrane. It catalyses the reaction a di-trans,poly-cis-dolichyl phosphate + GDP-alpha-D-mannose = a di-trans,poly-cis-dolichyl beta-D-mannosyl phosphate + GDP. It participates in protein modification; protein glycosylation. Transfers mannose from GDP-mannose to dolichol monophosphate to form dolichol phosphate mannose (Dol-P-Man) which is the mannosyl donor in pathways leading to N-glycosylation, glycosyl phosphatidylinositol membrane anchoring, and O-mannosylation of proteins. In Pyrococcus furiosus (strain ATCC 43587 / DSM 3638 / JCM 8422 / Vc1), this protein is Dolichol-phosphate mannosyltransferase.